The sequence spans 371 residues: 4-hydroxy-3-methylbut-2-en-1-yl diphosphate synthase (flavodoxin) (371 aa).

4 residues coordinate [4Fe-4S] cluster: cysteine 268, cysteine 271, cysteine 303, and glutamate 310.

The protein belongs to the IspG family. Requires [4Fe-4S] cluster as cofactor.

It carries out the reaction (2E)-4-hydroxy-3-methylbut-2-enyl diphosphate + oxidized [flavodoxin] + H2O + 2 H(+) = 2-C-methyl-D-erythritol 2,4-cyclic diphosphate + reduced [flavodoxin]. Its pathway is isoprenoid biosynthesis; isopentenyl diphosphate biosynthesis via DXP pathway; isopentenyl diphosphate from 1-deoxy-D-xylulose 5-phosphate: step 5/6. Functionally, converts 2C-methyl-D-erythritol 2,4-cyclodiphosphate (ME-2,4cPP) into 1-hydroxy-2-methyl-2-(E)-butenyl 4-diphosphate. The chain is 4-hydroxy-3-methylbut-2-en-1-yl diphosphate synthase (flavodoxin) from Macrococcus caseolyticus (strain JCSC5402) (Macrococcoides caseolyticum).